Here is a 604-residue protein sequence, read N- to C-terminus: Glutamine--fructose-6-phosphate aminotransferase [isomerizing] (604 aa).

Residue Cys-2 is the Nucleophile; for GATase activity of the active site. The region spanning 2–216 (CGIVGYVGFR…DGDVVRLTRE (215 aa)) is the Glutamine amidotransferase type-2 domain. SIS domains lie at 281 to 420 (LALD…GRGA) and 453 to 594 (VAEK…VDQP). The For Fru-6P isomerization activity role is filled by Lys-599.

As to quaternary structure, homodimer.

Its subcellular location is the cytoplasm. It carries out the reaction D-fructose 6-phosphate + L-glutamine = D-glucosamine 6-phosphate + L-glutamate. Its function is as follows. Catalyzes the first step in hexosamine metabolism, converting fructose-6P into glucosamine-6P using glutamine as a nitrogen source. The polypeptide is Glutamine--fructose-6-phosphate aminotransferase [isomerizing] (Thermus thermophilus (strain ATCC 27634 / DSM 579 / HB8)).